Here is a 708-residue protein sequence, read N- to C-terminus: Exocyst complex component 8 (708 aa).

One can recognise a PH domain in the interval 168-268 (YLVYNGDLLE…WLEVLEETKR (101 aa)). A compositionally biased stretch (basic and acidic residues) spans 271–282 (ALSEKRRLEQEA). The disordered stretch occupies residues 271–314 (ALSEKRRLEQEALPRPAPTPPESTNPFEEEEEEEEEPSAEEEAV). Acidic residues predominate over residues 297–314 (FEEEEEEEEEPSAEEEAV).

Belongs to the EXO84 family. As to quaternary structure, the exocyst complex is composed of EXOC1, EXOC2, EXOC3, EXOC4, EXOC5, EXOC6, EXOC7 and EXOC8.

It localises to the cytoplasm. Its subcellular location is the perinuclear region. The protein resides in the cell projection. It is found in the growth cone. Component of the exocyst complex involved in the docking of exocytic vesicles with fusion sites on the plasma membrane. The polypeptide is Exocyst complex component 8 (EXOC8) (Gallus gallus (Chicken)).